Consider the following 775-residue polypeptide: 5-methyltetrahydropteroyltriglutamate--homocysteine methyltransferase (775 aa).

5-methyltetrahydropteroyltri-L-glutamate-binding positions include 16 to 19 (REMK) and lysine 115. Residues 435–437 (IGS) and glutamate 488 contribute to the L-homocysteine site. Residues 435-437 (IGS) and glutamate 488 contribute to the L-methionine site. 5-methyltetrahydropteroyltri-L-glutamate is bound by residues 519 to 520 (RC) and tryptophan 565. Aspartate 603 contributes to the L-homocysteine binding site. Aspartate 603 is a binding site for L-methionine. Residue glutamate 609 participates in 5-methyltetrahydropteroyltri-L-glutamate binding. 3 residues coordinate Zn(2+): histidine 645, cysteine 647, and glutamate 669. The active-site Proton donor is histidine 698. Cysteine 730 serves as a coordination point for Zn(2+).

It belongs to the vitamin-B12 independent methionine synthase family. Zn(2+) serves as cofactor.

It carries out the reaction 5-methyltetrahydropteroyltri-L-glutamate + L-homocysteine = tetrahydropteroyltri-L-glutamate + L-methionine. It functions in the pathway amino-acid biosynthesis; L-methionine biosynthesis via de novo pathway; L-methionine from L-homocysteine (MetE route): step 1/1. Catalyzes the transfer of a methyl group from 5-methyltetrahydrofolate to homocysteine resulting in methionine formation. The sequence is that of 5-methyltetrahydropteroyltriglutamate--homocysteine methyltransferase from Coxiella burnetii (strain CbuK_Q154) (Coxiella burnetii (strain Q154)).